The sequence spans 391 residues: Anhydro-N-acetylmuramic acid kinase (391 aa).

Residue Gly9 to Glu16 participates in ATP binding.

It belongs to the anhydro-N-acetylmuramic acid kinase family.

It carries out the reaction 1,6-anhydro-N-acetyl-beta-muramate + ATP + H2O = N-acetyl-D-muramate 6-phosphate + ADP + H(+). The protein operates within amino-sugar metabolism; 1,6-anhydro-N-acetylmuramate degradation. It participates in cell wall biogenesis; peptidoglycan recycling. In terms of biological role, catalyzes the specific phosphorylation of 1,6-anhydro-N-acetylmuramic acid (anhMurNAc) with the simultaneous cleavage of the 1,6-anhydro ring, generating MurNAc-6-P. Is required for the utilization of anhMurNAc either imported from the medium or derived from its own cell wall murein, and thus plays a role in cell wall recycling. This chain is Anhydro-N-acetylmuramic acid kinase, found in Streptomyces coelicolor (strain ATCC BAA-471 / A3(2) / M145).